The sequence spans 257 residues: UPF0246 protein YaaA (257 aa).

It belongs to the UPF0246 family.

This Salmonella choleraesuis (strain SC-B67) protein is UPF0246 protein YaaA.